The following is a 1094-amino-acid chain: Probable arabinosyltransferase C (1094 aa).

Transmembrane regions (helical) follow at residues 28 to 50, 232 to 251, 264 to 286, 341 to 360, 373 to 392, 431 to 453, 466 to 488, 530 to 552, 565 to 582, 586 to 608, 620 to 642, 657 to 679, and 700 to 722; these read IARY…TPLL, AAMI…LHIL, PARW…WWHF, SIWM…WVIS, TSRA…WLPL, IGAL…LVAI, RFGV…IPIF, SIAR…AMSL, SRRI…MMFT, WTHH…AVAV, TVFA…GWWY, WRWS…AAWF, and LAGI…EVVS. Residues 817-831 show a composition bias toward low complexity; the sequence is GSEPGTEGGTTAAPG. The segment at 817-836 is disordered; the sequence is GSEPGTEGGTTAAPGINGSR.

This sequence belongs to the emb family.

It localises to the cell membrane. Arabinosyl transferase responsible for the polymerization of arabinose into the arabinan of arabinogalactan. The polypeptide is Probable arabinosyltransferase C (embC) (Mycobacterium tuberculosis (strain CDC 1551 / Oshkosh)).